The chain runs to 120 residues: SPbeta prophage-derived uncharacterized protein YosG (120 aa).

The chain is SPbeta prophage-derived uncharacterized protein YosG (yosG) from Bacillus subtilis (strain 168).